Here is a 424-residue protein sequence, read N- to C-terminus: MDKLRMVGGTPLKGEVVIAGAKNAALPILCACLLTDQPVVLRNVPDLQDVRTMLKLLQEIGVTIDFPSAGDRSYMVLNAAVIKSSEATYEMVKTMRASILVLGPLLARMHSAKVSLPGGCAIGARPVDQHIKGLKAMGATIKIKSGYIQAETKPQSDRLKGASILTDMITVTGTENLLMAATLASGTTVLENAAREPEVGDLAELLVKMGAKISGIGSDRLVIEGVDKLHGAEHSVIPDRIEAGTFLCAVVATGGEITVKHCRPDTLDAVIVKLKEAGLQTEIGPDWIKASMQGRPKAVNFRTSEYPAFPTDMQAQLMTVNAIAAGSSMITETIFENRFMHVQELNRLGADIAIEGNTAIAQGVEKLSGAIVMATDLRASASLVIAGLAAQGETQVDRIYHLDRGYDRMEQKLTLLGANIERIK.

22–23 (KN) is a phosphoenolpyruvate binding site. Arg-96 lines the UDP-N-acetyl-alpha-D-glucosamine pocket. Residue Cys-120 is the Proton donor of the active site. Cys-120 carries the 2-(S-cysteinyl)pyruvic acid O-phosphothioketal modification. UDP-N-acetyl-alpha-D-glucosamine-binding positions include 125-129 (RPVDQ), Asp-312, and Ile-334.

This sequence belongs to the EPSP synthase family. MurA subfamily.

The protein localises to the cytoplasm. It catalyses the reaction phosphoenolpyruvate + UDP-N-acetyl-alpha-D-glucosamine = UDP-N-acetyl-3-O-(1-carboxyvinyl)-alpha-D-glucosamine + phosphate. The protein operates within cell wall biogenesis; peptidoglycan biosynthesis. Functionally, cell wall formation. Adds enolpyruvyl to UDP-N-acetylglucosamine. The protein is UDP-N-acetylglucosamine 1-carboxyvinyltransferase of Polynucleobacter necessarius subsp. necessarius (strain STIR1).